Reading from the N-terminus, the 427-residue chain is Enolase 2 (427 aa).

Glutamine 165 is a (2R)-2-phosphoglycerate binding site. The active-site Proton donor is glutamate 207. Mg(2+) contacts are provided by aspartate 244, glutamate 287, and aspartate 314. 4 residues coordinate (2R)-2-phosphoglycerate: lysine 339, arginine 368, serine 369, and lysine 390. The active-site Proton acceptor is the lysine 339.

This sequence belongs to the enolase family. In terms of assembly, component of the RNA degradosome, a multiprotein complex involved in RNA processing and mRNA degradation. It depends on Mg(2+) as a cofactor.

Its subcellular location is the cytoplasm. It is found in the secreted. It localises to the cell surface. The enzyme catalyses (2R)-2-phosphoglycerate = phosphoenolpyruvate + H2O. It participates in carbohydrate degradation; glycolysis; pyruvate from D-glyceraldehyde 3-phosphate: step 4/5. Its function is as follows. Catalyzes the reversible conversion of 2-phosphoglycerate (2-PG) into phosphoenolpyruvate (PEP). It is essential for the degradation of carbohydrates via glycolysis. The polypeptide is Enolase 2 (Pseudomonas syringae pv. tomato (strain ATCC BAA-871 / DC3000)).